The primary structure comprises 1018 residues: DNA polymerase gamma (1018 aa).

This sequence belongs to the DNA polymerase type-A family. It depends on Mg(2+) as a cofactor.

It is found in the mitochondrion. It carries out the reaction DNA(n) + a 2'-deoxyribonucleoside 5'-triphosphate = DNA(n+1) + diphosphate. Involved in the replication of mitochondrial DNA. The sequence is that of DNA polymerase gamma (mip1) from Schizosaccharomyces pombe (strain 972 / ATCC 24843) (Fission yeast).